The primary structure comprises 1551 residues: ABC-type transporter phomO (1551 aa).

The next 7 helical transmembrane spans lie at 34–54, 110–130, 139–159, 172–192, 202–222, 314–334, and 358–378; these read LYFE…LLAA, CTAG…CTTV, SVPA…LAHF, SSSL…APLV, GSAL…LIAV, LGLY…FTLA, and GLIG…GWYW. The ABC transmembrane type-1 1 domain maps to 326–599; the sequence is LCLAGFTLAQ…LLQIIPSFGA (274 aa). N384 carries N-linked (GlcNAc...) asparagine glycosylation. A run of 4 helical transmembrane segments spans residues 428 to 448, 452 to 472, 535 to 555, and 577 to 597; these read LAYA…TWML, VGPP…ASTY, LIVG…VLVF, and LIWI…IPSF. The ABC transporter 1 domain occupies 645–861; that stretch reads IHNSSFSYTD…VEDENGDVDN (217 aa). N647 carries N-linked (GlcNAc...) asparagine glycosylation. 678–685 lines the ATP pocket; that stretch reads GPAGCGKS. N-linked (GlcNAc...) asparagine glycosylation is present at N721. The interval 843–889 is disordered; sequence YQFPPSQADVEDENGDVDNGAENTRPRESSHTTEAQSGPPEPKSKPT. Helical transmembrane passes span 903 to 923, 959 to 979, 1027 to 1044, and 1137 to 1157; these read SIGF…AFCL, VLPL…IVPL, LFNT…VILI, and LVLN…AVGL. Positions 910-1199 constitute an ABC transmembrane type-1 2 domain; it reads VLFIGGGIIF…LLTAWTSLET (290 aa). A glycan (N-linked (GlcNAc...) asparagine) is linked at N1179. A compositionally biased stretch (basic and acidic residues) spans 1219–1228; it reads DVLVRPDSLD. The disordered stretch occupies residues 1219–1296; sequence DVLVRPDSLD…HEATTITTTS (78 aa). Residues 1259-1270 show a composition bias toward acidic residues; that stretch reads YDDDDESDENTD. Residues 1287–1535 form the ABC transporter 2 domain; it reads HEATTITTTS…SDIFAFFGRS (249 aa). An ATP-binding site is contributed by 1323-1330; the sequence is GRTGSGKS. N1486 carries N-linked (GlcNAc...) asparagine glycosylation.

This sequence belongs to the ABC transporter superfamily. ABCC family. Conjugate transporter (TC 3.A.1.208) subfamily.

The protein localises to the membrane. Its function is as follows. ABC-type transporter; part of the gene cluster that mediates the biosynthesis of the phomopsins, a group of hexapeptide mycotoxins which infects lupins and causes lupinosis disease in livestock. The chain is ABC-type transporter phomO from Diaporthe leptostromiformis (Lupinosis disease fungus).